The primary structure comprises 91 residues: Long neurotoxin OH-57 (91 aa).

The first 21 residues, 1–21, serve as a signal peptide directing secretion; it reads MKTLLLTLVVVTIVCLDLGYT. 5 cysteine pairs are disulfide-bonded: C24-C41, C34-C62, C47-C51, C66-C77, and C78-C83.

It belongs to the three-finger toxin family. Long-chain subfamily. Type II alpha-neurotoxin sub-subfamily. In terms of tissue distribution, expressed by the venom gland.

It is found in the secreted. Its function is as follows. Binds with high affinity to muscular (alpha-1/CHRNA1) and neuronal (alpha-7/CHRNA7) nicotinic acetylcholine receptor (nAChR) and inhibits acetylcholine from binding to the receptor, thereby impairing neuromuscular and neuronal transmission. The protein is Long neurotoxin OH-57 of Ophiophagus hannah (King cobra).